A 176-amino-acid chain; its full sequence is Protein SPMIP1 (176 aa).

The segment at threonine 55–proline 80 is disordered. Residues proline 61–proline 80 show a composition bias toward pro residues.

The polypeptide is Protein SPMIP1 (Homo sapiens (Human)).